The sequence spans 328 residues: GTP cyclohydrolase MptA (328 aa).

It belongs to the GTP cyclohydrolase IV family. In terms of assembly, homodimer. The cofactor is Fe(2+).

The catalysed reaction is GTP + H2O = 7,8-dihydroneopterin 2',3'-cyclic phosphate + formate + diphosphate + H(+). It participates in cofactor biosynthesis; 5,6,7,8-tetrahydromethanopterin biosynthesis. Its function is as follows. Converts GTP to 7,8-dihydro-D-neopterin 2',3'-cyclic phosphate, the first intermediate in the biosynthesis of coenzyme methanopterin. The protein is GTP cyclohydrolase MptA of Methanospirillum hungatei JF-1 (strain ATCC 27890 / DSM 864 / NBRC 100397 / JF-1).